Reading from the N-terminus, the 344-residue chain is HTH-type transcriptional regulator MalR (344 aa).

An HTH lacI-type domain is found at Met-1 to Gln-54. The H-T-H motif DNA-binding region spans Leu-5–Asn-24.

Its function is as follows. Transcriptional repressor of the maltosaccharide utilization operon malEFG. This chain is HTH-type transcriptional regulator MalR (malR), found in Streptomyces coelicolor (strain ATCC BAA-471 / A3(2) / M145).